We begin with the raw amino-acid sequence, 245 residues long: Bis(5'-nucleosyl)-tetraphosphatase PrpE [asymmetrical] (245 aa).

Belongs to the PrpE family. Ni(2+) is required as a cofactor.

The catalysed reaction is P(1),P(4)-bis(5'-guanosyl) tetraphosphate + H2O = GMP + GTP + 2 H(+). In terms of biological role, asymmetrically hydrolyzes Ap4p to yield AMP and ATP. The sequence is that of Bis(5'-nucleosyl)-tetraphosphatase PrpE [asymmetrical] from Anoxybacillus flavithermus (strain DSM 21510 / WK1).